The primary structure comprises 2183 residues: Genome polyprotein (2183 aa).

A lipid anchor (N-myristoyl glycine; by host) is attached at Gly-2. The Cytoplasmic segment spans residues 2–1493 (GAQVSTQKTG…HVSRAFICLQ (1492 aa)). The amphipathic alpha-helix stretch occupies residues 566 to 582 (FYQGPTEESVERAMGRV). Residues His-870 and Asp-888 each act as for protease 2A activity in the active site. The Zn(2+) site is built by Cys-905 and Cys-907. The For protease 2A activity role is filled by Cys-959. Zn(2+) contacts are provided by Cys-965 and His-967. Residues 1099-1171 (NNGWLKKFTE…EQSAPSQSDQ (73 aa)) are membrane-binding. The segment at 1099-1237 (NNGWLKKFTE…SPGAGKSVAT (139 aa)) is oligomerization. The segment at 1120–1124 (AVKIQ) is RNA-binding. Positions 1203 to 1359 (EKKMSNYIQF…SMYSQNGKIN (157 aa)) constitute an SF3 helicase domain. Zn(2+)-binding residues include Cys-1367, Cys-1379, and Cys-1384. Residues 1367 to 1384 (CDEECCPVNFKRCCPLVC) form a C4-type; degenerate zinc finger. The RNA-binding stretch occupies residues 1411 to 1418 (EYNHRHSV). Residues 1422 to 1427 (LEALFQ) form an oligomerization region. The stretch at 1494–1509 (ALTTFVSVAGIIYIIY) is an intramembrane region. Over 1510 to 2183 (KLFAGFQGAY…TLRRKWLDSF (674 aa)) the chain is Cytoplasmic. Tyr-1519 carries the post-translational modification O-(5'-phospho-RNA)-tyrosine. The Peptidase C3 domain maps to 1539-1717 (GPAFEFAVAM…FSAGLLKHYF (179 aa)). Residues His-1578, Glu-1609, and Cys-1685 each act as for protease 3C activity in the active site. In terms of domain architecture, RdRp catalytic spans 1948 to 2064 (GHLIAFDYSG…SYPWPIDASL (117 aa)). Residues Asp-1954 and Asp-2050 each coordinate Mg(2+).

Belongs to the picornaviruses polyprotein family. As to quaternary structure, interacts with capsid protein VP1 and capsid protein VP3 to form heterotrimeric protomers. In terms of assembly, interacts with capsid protein VP0, and capsid protein VP3 to form heterotrimeric protomers. Five protomers subsequently associate to form pentamers which serve as building blocks for the capsid. Interacts with capsid protein VP2, capsid protein VP3 and capsid protein VP4 following cleavage of capsid protein VP0. Interacts with host CXADR. Interacts with capsid protein VP1 and capsid protein VP3 in the mature capsid. As to quaternary structure, interacts with capsid protein VP0 and capsid protein VP1 to form heterotrimeric protomers. Five protomers subsequently associate to form pentamers which serve as building blocks for the capsid. Interacts with capsid protein VP4 in the mature capsid. Interacts with protein 2C; this interaction may be important for virion morphogenesis. In terms of assembly, interacts with capsid protein VP1 and capsid protein VP3. Homodimer. As to quaternary structure, homohexamer; forms a hexameric ring structure with 6-fold symmetry characteristic of AAA+ ATPases. Interacts (via N-terminus) with host RTN3 (via reticulon domain); this interaction is important for viral replication. Interacts with capsid protein VP3; this interaction may be important for virion morphogenesis. In terms of assembly, interacts with protein 3CD. Homodimer. Interacts with host GBF1. Interacts (via GOLD domain) with host ACBD3 (via GOLD domain); this interaction allows the formation of a viral protein 3A/ACBD3 heterotetramer with a 2:2 stoichiometry, which will stimulate the recruitment of host PI4KB in order to synthesize PI4P at the viral RNA replication sites. As to quaternary structure, interacts with RNA-directed RNA polymerase. In terms of assembly, interacts with protein 3AB and with RNA-directed RNA polymerase. Interacts with Viral protein genome-linked and with protein 3CD. It depends on Mg(2+) as a cofactor. In terms of processing, specific enzymatic cleavages in vivo by the viral proteases yield processing intermediates and the mature proteins. Post-translationally, myristoylation is required for the formation of pentamers during virus assembly. Further assembly of 12 pentamers and a molecule of genomic RNA generates the provirion. During virion maturation, immature virions are rendered infectious following cleavage of VP0 into VP4 and VP2. This maturation seems to be an autocatalytic event triggered by the presence of RNA in the capsid and it is followed by a conformational change infectious virion. In terms of processing, myristoylation is required during RNA encapsidation and formation of the mature virus particle. Post-translationally, VPg is uridylylated by the polymerase into VPg-pUpU. This acts as a nucleotide-peptide primer for the genomic RNA replication.

Its subcellular location is the virion. The protein resides in the host cytoplasm. The protein localises to the host cytoplasmic vesicle membrane. It is found in the host nucleus. The enzyme catalyses a ribonucleoside 5'-triphosphate + H2O = a ribonucleoside 5'-diphosphate + phosphate + H(+). The catalysed reaction is Selective cleavage of Tyr-|-Gly bond in the picornavirus polyprotein.. It catalyses the reaction RNA(n) + a ribonucleoside 5'-triphosphate = RNA(n+1) + diphosphate. It carries out the reaction Selective cleavage of Gln-|-Gly bond in the poliovirus polyprotein. In other picornavirus reactions Glu may be substituted for Gln, and Ser or Thr for Gly.. With respect to regulation, replication or transcription is subject to high level of random mutations by the nucleotide analog ribavirin. In terms of biological role, forms an icosahedral capsid of pseudo T=3 symmetry with capsid proteins VP2 and VP3. The capsid is 300 Angstroms in diameter, composed of 60 copies of each capsid protein and enclosing the viral positive strand RNA genome. Capsid protein VP1 mainly forms the vertices of the capsid. Capsid protein VP1 interacts with host CXADR to provide virion attachment to target host cells. This attachment induces virion internalization. Tyrosine kinases are probably involved in the entry process. After binding to its receptor, the capsid undergoes conformational changes. Capsid protein VP1 N-terminus (that contains an amphipathic alpha-helix) and capsid protein VP4 are externalized. Together, they shape a pore in the host membrane through which viral genome is translocated to host cell cytoplasm. Functionally, forms an icosahedral capsid of pseudo T=3 symmetry with capsid proteins VP2 and VP3. The capsid is 300 Angstroms in diameter, composed of 60 copies of each capsid protein and enclosing the viral positive strand RNA genome. Its function is as follows. Lies on the inner surface of the capsid shell. After binding to the host receptor, the capsid undergoes conformational changes. Capsid protein VP4 is released, Capsid protein VP1 N-terminus is externalized, and together, they shape a pore in the host membrane through which the viral genome is translocated into the host cell cytoplasm. Component of immature procapsids, which is cleaved into capsid proteins VP4 and VP2 after maturation. Allows the capsid to remain inactive before the maturation step. In terms of biological role, cysteine protease that cleaves viral polyprotein and specific host proteins. It is responsible for the autocatalytic cleavage between the P1 and P2 regions, which is the first cleavage occurring in the polyprotein. Also cleaves the host translation initiation factor EIF4G1, in order to shut down the capped cellular mRNA translation. Inhibits the host nucleus-cytoplasm protein and RNA trafficking by cleaving host members of the nuclear pores. Counteracts stress granule formation probably by antagonizing its assembly or promoting its dissassembly. Cleaves and inhibits host IFIH1/MDA5, thereby inhibiting the type-I IFN production and the establishment of the antiviral state. Cleaves and inhibits host MAVS, thereby inhibiting the type-I IFN production and the establishment of the antiviral state. Functionally, plays an essential role in the virus replication cycle by acting as a viroporin. Creates a pore in the host endoplasmic reticulum and as a consequence releases Ca2+ in the cytoplasm of infected cell. In turn, high levels of cytoplasmic calcium may trigger membrane trafficking and transport of viral ER-associated proteins to viroplasms, sites of viral genome replication. Its function is as follows. Induces and associates with structural rearrangements of intracellular membranes. Displays RNA-binding, nucleotide binding and NTPase activities. May play a role in virion morphogenesis and viral RNA encapsidation by interacting with the capsid protein VP3. Localizes the viral replication complex to the surface of membranous vesicles. Together with protein 3CD binds the Cis-Active RNA Element (CRE) which is involved in RNA synthesis initiation. Acts as a cofactor to stimulate the activity of 3D polymerase, maybe through a nucleid acid chaperone activity. In terms of biological role, localizes the viral replication complex to the surface of membranous vesicles. It inhibits host cell endoplasmic reticulum-to-Golgi apparatus transport and causes the disassembly of the Golgi complex, possibly through GBF1 interaction. This would result in depletion of MHC, trail receptors and IFN receptors at the host cell surface. Plays an essential role in viral RNA replication by recruiting ACBD3 and PI4KB at the viral replication sites, thereby allowing the formation of the rearranged membranous structures where viral replication takes place. Functionally, acts as a primer for viral RNA replication and remains covalently bound to viral genomic RNA. VPg is uridylylated prior to priming replication into VPg-pUpU. The oriI viral genomic sequence may act as a template for this. The VPg-pUpU is then used as primer on the genomic RNA poly(A) by the RNA-dependent RNA polymerase to replicate the viral genome. During genome replication, the VPg-RNA linkage is removed by the host TDP2, thereby accelerating replication. During the late stage of the replication cycle, host TDP2 is excluded from sites of viral RNA synthesis and encapsidation, allowing for the generation of progeny virions. Its function is as follows. Involved in the viral replication complex and viral polypeptide maturation. It exhibits protease activity with a specificity and catalytic efficiency that is different from protease 3C. Protein 3CD lacks polymerase activity. Protein 3CD binds to the 5'UTR of the viral genome. Replicates the viral genomic RNA on the surface of intracellular membranes. May form linear arrays of subunits that propagate along a strong head-to-tail interaction called interface-I. Covalently attaches UMP to a tyrosine of VPg, which is used to prime RNA synthesis. The positive stranded RNA genome is first replicated at virus induced membranous vesicles, creating a dsRNA genomic replication form. This dsRNA is then used as template to synthesize positive stranded RNA genomes. ss(+)RNA genomes are either translated, replicated or encapsidated. In terms of biological role, major viral protease that mediates proteolytic processing of the polyprotein. Cleaves host EIF5B, contributing to host translation shutoff. Also cleaves host PABPC1, contributing to host translation shutoff. Cleaves host NLRP1, triggers host N-glycine-mediated degradation of the autoinhibitory NLRP1 N-terminal fragment. This is Genome polyprotein from Coxsackievirus B4 (strain JVB / Benschoten / New York/51).